The primary structure comprises 329 residues: Ketol-acid reductoisomerase (NADP(+)) (329 aa).

The KARI N-terminal Rossmann domain maps to 2-182; the sequence is TQLFYDTDAD…GGTRAGILET (181 aa). NADP(+) is bound by residues 25–28, S51, S53, and 83–86; these read YGSQ and DEFQ. The active site involves H108. G134 lines the NADP(+) pocket. The KARI C-terminal knotted domain occupies 183–328; the sequence is NFKEETETDL…KGLRAMFSWL (146 aa). 4 residues coordinate Mg(2+): D191, E195, E227, and E231. S252 contributes to the substrate binding site.

Belongs to the ketol-acid reductoisomerase family. Mg(2+) is required as a cofactor.

It catalyses the reaction (2R)-2,3-dihydroxy-3-methylbutanoate + NADP(+) = (2S)-2-acetolactate + NADPH + H(+). The enzyme catalyses (2R,3R)-2,3-dihydroxy-3-methylpentanoate + NADP(+) = (S)-2-ethyl-2-hydroxy-3-oxobutanoate + NADPH + H(+). Its pathway is amino-acid biosynthesis; L-isoleucine biosynthesis; L-isoleucine from 2-oxobutanoate: step 2/4. It functions in the pathway amino-acid biosynthesis; L-valine biosynthesis; L-valine from pyruvate: step 2/4. Involved in the biosynthesis of branched-chain amino acids (BCAA). Catalyzes an alkyl-migration followed by a ketol-acid reduction of (S)-2-acetolactate (S2AL) to yield (R)-2,3-dihydroxy-isovalerate. In the isomerase reaction, S2AL is rearranged via a Mg-dependent methyl migration to produce 3-hydroxy-3-methyl-2-ketobutyrate (HMKB). In the reductase reaction, this 2-ketoacid undergoes a metal-dependent reduction by NADPH to yield (R)-2,3-dihydroxy-isovalerate. In Prochlorococcus marinus (strain MIT 9515), this protein is Ketol-acid reductoisomerase (NADP(+)).